A 230-amino-acid chain; its full sequence is uncharacterized protein (230 aa).

Helical transmembrane passes span 34–54, 56–76, 87–107, 111–131, 146–166, 167–187, and 205–225; these read FFAGSLLLATVGALLGLMNFQ, VVQYKWVFFIAEIVAFFGLMF, MLFAFTSLSGVTLVPLLGMVI, GLGAVWQALGMTTIVFGLMSV, MLFIALIVVVVCSLINLFLGS, PMFQVVIAGASAILFSLYIAY, and VSLYLDFLNVFISILQIIGIF.

Belongs to the BI1 family.

The protein resides in the cell membrane. This is an uncharacterized protein from Helicobacter pylori (strain J99 / ATCC 700824) (Campylobacter pylori J99).